Reading from the N-terminus, the 374-residue chain is tRNA-specific 2-thiouridylase MnmA (374 aa).

ATP contacts are provided by residues 10-17 (AMSGGVDS) and Leu36. The active-site Nucleophile is the Cys111. Cys111 and Cys209 are joined by a disulfide. Gly135 provides a ligand contact to ATP. Residues 159 to 161 (KDQ) form an interaction with tRNA region. The active-site Cysteine persulfide intermediate is the Cys209.

It belongs to the MnmA/TRMU family.

Its subcellular location is the cytoplasm. The enzyme catalyses S-sulfanyl-L-cysteinyl-[protein] + uridine(34) in tRNA + AH2 + ATP = 2-thiouridine(34) in tRNA + L-cysteinyl-[protein] + A + AMP + diphosphate + H(+). In terms of biological role, catalyzes the 2-thiolation of uridine at the wobble position (U34) of tRNA, leading to the formation of s(2)U34. This chain is tRNA-specific 2-thiouridylase MnmA, found in Acidobacterium capsulatum (strain ATCC 51196 / DSM 11244 / BCRC 80197 / JCM 7670 / NBRC 15755 / NCIMB 13165 / 161).